The following is a 162-amino-acid chain: Protein mmf1, mitochondrial (162 aa).

It belongs to the RutC family.

The protein localises to the mitochondrion. It localises to the cytoplasm. Functionally, plays a role in the maintenance of mitochondrial DNA. This Schizosaccharomyces pombe (strain 972 / ATCC 24843) (Fission yeast) protein is Protein mmf1, mitochondrial (mmf1).